Reading from the N-terminus, the 926-residue chain is Alanine--tRNA ligase (926 aa).

Zn(2+) contacts are provided by His615, His619, Cys719, and His723. Residues 887–910 (RVGGGGGGPPDFAQGGGPDADALD) are disordered. Residues 888-904 (VGGGGGGPPDFAQGGGP) show a composition bias toward gly residues.

It belongs to the class-II aminoacyl-tRNA synthetase family. It depends on Zn(2+) as a cofactor.

Its subcellular location is the cytoplasm. The catalysed reaction is tRNA(Ala) + L-alanine + ATP = L-alanyl-tRNA(Ala) + AMP + diphosphate. Its function is as follows. Catalyzes the attachment of alanine to tRNA(Ala) in a two-step reaction: alanine is first activated by ATP to form Ala-AMP and then transferred to the acceptor end of tRNA(Ala). Also edits incorrectly charged Ser-tRNA(Ala) and Gly-tRNA(Ala) via its editing domain. The protein is Alanine--tRNA ligase of Halorubrum lacusprofundi (strain ATCC 49239 / DSM 5036 / JCM 8891 / ACAM 34).